The primary structure comprises 144 residues: Transcriptional regulator SlyA (144 aa).

The region spanning 2–135 (ESPLGSDLAR…LITLIAKLEH (134 aa)) is the HTH marR-type domain. Residues 49–72 (QIQLAKAIGIEQPSLVRTLDQLEE) constitute a DNA-binding region (H-T-H motif).

This sequence belongs to the SlyA family. As to quaternary structure, homodimer.

Functionally, transcription regulator that can specifically activate or repress expression of target genes. This chain is Transcriptional regulator SlyA, found in Escherichia coli (strain 55989 / EAEC).